We begin with the raw amino-acid sequence, 131 residues long: Fumarate reductase subunit C (131 aa).

Helical transmembrane passes span 30–50, 57–77, and 109–129; these read EGTA…LFAL, WMGF…LIAL, and IIKG…YVAL.

The protein belongs to the FrdC family. Part of an enzyme complex containing four subunits: a flavoprotein (FrdA), an iron-sulfur protein (FrdB), and two hydrophobic anchor proteins (FrdC and FrdD).

The protein localises to the cell inner membrane. Two distinct, membrane-bound, FAD-containing enzymes are responsible for the catalysis of fumarate and succinate interconversion; fumarate reductase is used in anaerobic growth, and succinate dehydrogenase is used in aerobic growth. Anchors the catalytic components of the fumarate reductase complex to the cell inner membrane, binds quinones. The chain is Fumarate reductase subunit C from Citrobacter koseri (strain ATCC BAA-895 / CDC 4225-83 / SGSC4696).